The sequence spans 489 residues: 5'-AMP-activated protein kinase subunit gamma-3 (489 aa).

Residues 1–113 (MEPGLEHALR…PAGVGTPPTG (113 aa)) are disordered. A compositionally biased stretch (low complexity) spans 34–46 (SSSWPSPAVTSSS). A compositionally biased stretch (basic residues) spans 50–62 (RGKRRAKALRWTR). CBS domains lie at 197 to 258 (MATS…RSPL), 280 to 340 (CFKP…LLPR), and 355 to 415 (TFRD…HLDM). Residues R225, 240–245 (MLTITD), V285, 306–307 (HR), and K325 each bind ADP. AMP-binding positions include R225, 240–245 (MLTITD), V285, H306, 306–307 (HR), K325, T355, A360, 381–382 (SA), 397–400 (SRFD), R424, L432, H453, 453–454 (HR), and 469–472 (SLSD). ATP is bound by residues R225, 240–245 (MLTITD), V285, 306–307 (HR), R307, and K325. Positions 293 to 314 (LFEAVYTLIKNRIHRLPVLDPV) match the AMPK pseudosubstrate motif. ADP is bound by residues 397–400 (SRFD), R424, L432, and 453–454 (HR). Residues 397 to 400 (SRFD), R424, L432, and 453 to 454 (HR) contribute to the ATP site. Positions 427–486 (CLEGVLSCQPHESLGEVIDRIAREQVHRLVLVDETQHLLGVVSLSDILQALVLSPAGIDA) constitute a CBS 4 domain.

Belongs to the 5'-AMP-activated protein kinase gamma subunit family. As to quaternary structure, AMPK is a heterotrimer of an alpha catalytic subunit (PRKAA1 or PRKAA2), a beta (PRKAB1 or PRKAB2) and a gamma non-catalytic subunits (PRKAG1, PRKAG2 or PRKAG3). Interacts with FNIP1 and FNIP2. Phosphorylated by ULK1; leading to negatively regulate AMPK activity and suggesting the existence of a regulatory feedback loop between ULK1 and AMPK. In terms of processing, glycosylated; O-GlcNAcylated by OGT, promoting the AMP-activated protein kinase (AMPK) activity. Skeletal muscle, with weak expression in heart and pancreas.

AMP/ATP-binding subunit of AMP-activated protein kinase (AMPK), an energy sensor protein kinase that plays a key role in regulating cellular energy metabolism. In response to reduction of intracellular ATP levels, AMPK activates energy-producing pathways and inhibits energy-consuming processes: inhibits protein, carbohydrate and lipid biosynthesis, as well as cell growth and proliferation. AMPK acts via direct phosphorylation of metabolic enzymes, and by longer-term effects via phosphorylation of transcription regulators. AMPK also acts as a regulator of cellular polarity by remodeling the actin cytoskeleton; probably by indirectly activating myosin. The AMPK gamma3 subunit is a non-catalytic subunit with a regulatory role in muscle energy metabolism. It mediates binding to AMP, ADP and ATP, leading to AMPK activation or inhibition: AMP-binding results in allosteric activation of alpha catalytic subunit (PRKAA1 or PRKAA2) both by inducing phosphorylation and preventing dephosphorylation of catalytic subunits. ADP also stimulates phosphorylation, without stimulating already phosphorylated catalytic subunit. ATP promotes dephosphorylation of catalytic subunit, rendering the AMPK enzyme inactive. This chain is 5'-AMP-activated protein kinase subunit gamma-3 (PRKAG3), found in Homo sapiens (Human).